The following is an 871-amino-acid chain: DNA mismatch repair protein MutS (871 aa).

Position 605 to 612 (605 to 612 (GPNMGGKS)) interacts with ATP. Residues 791–840 (PQRPTSASVEQPVDSAKTETAATAEEPQQLSLFPTDEETKPKQPTKKERS) are disordered. Positions 827 to 840 (EETKPKQPTKKERS) are enriched in basic and acidic residues.

The protein belongs to the DNA mismatch repair MutS family.

Its function is as follows. This protein is involved in the repair of mismatches in DNA. It is possible that it carries out the mismatch recognition step. This protein has a weak ATPase activity. The chain is DNA mismatch repair protein MutS from Shouchella clausii (strain KSM-K16) (Alkalihalobacillus clausii).